The sequence spans 159 residues: Ribonuclease P protein component 2 (159 aa).

Belongs to the eukaryotic/archaeal RNase P protein component 2 family. Consists of a catalytic RNA component and at least 4-5 protein subunits.

The protein localises to the cytoplasm. The enzyme catalyses Endonucleolytic cleavage of RNA, removing 5'-extranucleotides from tRNA precursor.. Part of ribonuclease P, a protein complex that generates mature tRNA molecules by cleaving their 5'-ends. The protein is Ribonuclease P protein component 2 of Halorubrum lacusprofundi (strain ATCC 49239 / DSM 5036 / JCM 8891 / ACAM 34).